The primary structure comprises 645 residues: Serine/threonine-protein kinase Nek11 (645 aa).

The region spanning 29–287 is the Protein kinase domain; the sequence is YVLQQKLGSG…AIEILKIPYL (259 aa). Residues 35 to 43 and Lys61 each bind ATP; that span reads LGSGSFGTV. The active-site Proton acceptor is Asp158. Phosphoserine; by CHEK1 is present on Ser273. The stretch at 346 to 385 forms a coiled coil; it reads RLRKLQAADEKARKLKKIVEEKYEENSKRMQELRSRNFQQ. Positions 399-445 are disordered; sequence GMEEKEEQPEGRLSCSPQDEDEERWQGREEESDEPTLENLPESQPIP.

The protein belongs to the protein kinase superfamily. NEK Ser/Thr protein kinase family. NIMA subfamily. As to quaternary structure, interacts with isoform 1 of NEK2. It depends on Mn(2+) as a cofactor. Requires Mg(2+) as cofactor. Phosphorylated by NEK2. Phosphorylation at Ser-273 is important for its activation. In terms of tissue distribution, poorly expressed in cerebellum, trachea, lung, appendix, and uterus.

It localises to the nucleus. Its subcellular location is the nucleolus. The enzyme catalyses L-seryl-[protein] + ATP = O-phospho-L-seryl-[protein] + ADP + H(+). It carries out the reaction L-threonyl-[protein] + ATP = O-phospho-L-threonyl-[protein] + ADP + H(+). Autorepressed by intramolecular binding of the C-terminus which dissociates following phosphorylation by NEK2 isoform 1 in G1/S-arrested cells. NEK2 isoform 2 is largely not present in the nucleolus, and does not appear to phosphorylate NEK11. Activated in response to DNA damage. Inhibited by zinc. In terms of biological role, protein kinase which plays an important role in the G2/M checkpoint response to DNA damage. Controls degradation of CDC25A by directly phosphorylating it on residues whose phosphorylation is required for BTRC-mediated polyubiquitination and degradation. The chain is Serine/threonine-protein kinase Nek11 from Homo sapiens (Human).